The following is a 1134-amino-acid chain: Isoleucine--tRNA ligase (1134 aa).

The 'HIGH' region motif lies at 52–62 (PFANGLPHYGH). The 'KMSKS' region signature appears at 656–660 (KLSKR). Lysine 659 serves as a coordination point for ATP.

This sequence belongs to the class-I aminoacyl-tRNA synthetase family. IleS type 2 subfamily. In terms of assembly, monomer. Requires Zn(2+) as cofactor.

The protein localises to the cytoplasm. It catalyses the reaction tRNA(Ile) + L-isoleucine + ATP = L-isoleucyl-tRNA(Ile) + AMP + diphosphate. Functionally, catalyzes the attachment of isoleucine to tRNA(Ile). As IleRS can inadvertently accommodate and process structurally similar amino acids such as valine, to avoid such errors it has two additional distinct tRNA(Ile)-dependent editing activities. One activity is designated as 'pretransfer' editing and involves the hydrolysis of activated Val-AMP. The other activity is designated 'posttransfer' editing and involves deacylation of mischarged Val-tRNA(Ile). This Wolbachia sp. subsp. Brugia malayi (strain TRS) protein is Isoleucine--tRNA ligase.